A 692-amino-acid chain; its full sequence is Elongation factor G (692 aa).

One can recognise a tr-type G domain in the interval 8–283; sequence NRIRNIGIAA…AVIDYLPAPT (276 aa). Residues 17-24, 81-85, and 135-138 each bind GTP; these read AHIDAGKT, DTPGH, and NKMD.

It belongs to the TRAFAC class translation factor GTPase superfamily. Classic translation factor GTPase family. EF-G/EF-2 subfamily.

The protein localises to the cytoplasm. Functionally, catalyzes the GTP-dependent ribosomal translocation step during translation elongation. During this step, the ribosome changes from the pre-translocational (PRE) to the post-translocational (POST) state as the newly formed A-site-bound peptidyl-tRNA and P-site-bound deacylated tRNA move to the P and E sites, respectively. Catalyzes the coordinated movement of the two tRNA molecules, the mRNA and conformational changes in the ribosome. This is Elongation factor G from Helicobacter pylori (strain Shi470).